A 420-amino-acid polypeptide reads, in one-letter code: Acetylornithine aminotransferase (420 aa).

Pyridoxal 5'-phosphate contacts are provided by residues 118 to 119 (GA) and phenylalanine 151. Arginine 154 contributes to the N(2)-acetyl-L-ornithine binding site. Residue 242-245 (DEVQ) participates in pyridoxal 5'-phosphate binding. An N6-(pyridoxal phosphate)lysine modification is found at lysine 271. Position 298 (serine 298) interacts with N(2)-acetyl-L-ornithine. Residue threonine 299 coordinates pyridoxal 5'-phosphate.

This sequence belongs to the class-III pyridoxal-phosphate-dependent aminotransferase family. ArgD subfamily. Homodimer. Pyridoxal 5'-phosphate is required as a cofactor.

The protein localises to the cytoplasm. It catalyses the reaction N(2)-acetyl-L-ornithine + 2-oxoglutarate = N-acetyl-L-glutamate 5-semialdehyde + L-glutamate. The protein operates within amino-acid biosynthesis; L-arginine biosynthesis; N(2)-acetyl-L-ornithine from L-glutamate: step 4/4. The polypeptide is Acetylornithine aminotransferase (Parasynechococcus marenigrum (strain WH8102)).